The following is a 227-amino-acid chain: Ribonuclease 3 (227 aa).

Positions 4–133 constitute an RNase III domain; the sequence is FEELEKLLDY…LIAAIYLDSD (130 aa). Residue Glu-46 participates in Mg(2+) binding. The active site involves Asp-50. Residues Asn-119 and Glu-122 each contribute to the Mg(2+) site. Glu-122 is a catalytic residue. The 69-residue stretch at 158–226 folds into the DRBM domain; it reads DPKTALQEWA…ARELLHKLKL (69 aa).

Belongs to the ribonuclease III family. As to quaternary structure, homodimer. Mg(2+) serves as cofactor.

Its subcellular location is the cytoplasm. It catalyses the reaction Endonucleolytic cleavage to 5'-phosphomonoester.. Functionally, digests double-stranded RNA. Involved in the processing of primary rRNA transcript to yield the immediate precursors to the large and small rRNAs (23S and 16S). Processes some mRNAs, and tRNAs when they are encoded in the rRNA operon. Processes pre-crRNA and tracrRNA of type II CRISPR loci if present in the organism. This Rickettsia bellii (strain OSU 85-389) protein is Ribonuclease 3.